Here is a 358-residue protein sequence, read N- to C-terminus: Probable butyrate kinase (358 aa).

Belongs to the acetokinase family.

The protein resides in the cytoplasm. It carries out the reaction butanoate + ATP = butanoyl phosphate + ADP. The polypeptide is Probable butyrate kinase (Oceanobacillus iheyensis (strain DSM 14371 / CIP 107618 / JCM 11309 / KCTC 3954 / HTE831)).